We begin with the raw amino-acid sequence, 33 residues long: Protamine-1B (33 aa).

Positions 1-33 are disordered; the sequence is PRRRRRRSSSRPIRRRRPRRVSRRRRRGGRRRR.

As to expression, testis.

The protein resides in the nucleus. It is found in the chromosome. In terms of biological role, protamines substitute for histones in the chromatin of sperm during the haploid phase of spermatogenesis. They compact sperm DNA into a highly condensed, stable and inactive complex. The chain is Protamine-1B from Oncorhynchus mykiss (Rainbow trout).